The chain runs to 273 residues: Large ribosomal subunit protein uL2 (273 aa).

Disordered stretches follow at residues 32–53 (PLVE…TTRH) and 221–273 (RGTA…RRSK). Low complexity predominate over residues 39 to 48 (KSGGRNNNGR).

This sequence belongs to the universal ribosomal protein uL2 family. Part of the 50S ribosomal subunit. Forms a bridge to the 30S subunit in the 70S ribosome.

Functionally, one of the primary rRNA binding proteins. Required for association of the 30S and 50S subunits to form the 70S ribosome, for tRNA binding and peptide bond formation. It has been suggested to have peptidyltransferase activity; this is somewhat controversial. Makes several contacts with the 16S rRNA in the 70S ribosome. This Erwinia tasmaniensis (strain DSM 17950 / CFBP 7177 / CIP 109463 / NCPPB 4357 / Et1/99) protein is Large ribosomal subunit protein uL2.